A 217-amino-acid polypeptide reads, in one-letter code: Translation initiation factor IF-3 (217 aa).

Belongs to the IF-3 family. Monomer.

The protein resides in the cytoplasm. Functionally, IF-3 binds to the 30S ribosomal subunit and shifts the equilibrium between 70S ribosomes and their 50S and 30S subunits in favor of the free subunits, thus enhancing the availability of 30S subunits on which protein synthesis initiation begins. This chain is Translation initiation factor IF-3, found in Synechococcus sp. (strain CC9902).